The primary structure comprises 417 residues: Hydroxysteroid dehydrogenase-like protein 2 (417 aa).

NADP(+)-binding positions include 17-23 (GASRGIG), lysine 42, and aspartate 74. Tyrosine 168 acts as the Proton acceptor in catalysis. Lysine 172 serves as a coordination point for NADP(+). Residues 306–414 (SSPLQETFKA…KLEKILGQMN (109 aa)) form the SCP2 domain.

This sequence belongs to the short-chain dehydrogenases/reductases (SDR) family.

Its subcellular location is the peroxisome. The protein localises to the mitochondrion. Functionally, has apparently no steroid dehydrogenase activity. Might act as a metabolic regulator that affects systemic adaptation to nutritional cues. The protein is Hydroxysteroid dehydrogenase-like protein 2 (hsdl2) of Xenopus tropicalis (Western clawed frog).